We begin with the raw amino-acid sequence, 547 residues long: MFS-type transporter ltbE (547 aa).

The interval 1 to 23 (MEIAAETTGPAGVTTDVTNAEES) is disordered. A run of 13 helical transmembrane segments spans residues 33 to 53 (QGWA…VLAI), 74 to 94 (DIGW…PTCG), 104 to 124 (WVYC…AVAP), 135 to 155 (ISGL…SYCV), 165 to 185 (PIVL…GGSI), 195 to 215 (FIFW…WFTL), 240 to 260 (ATLL…GGIV), 267 to 287 (KVFG…CLQW), 310 to 330 (GFMM…PIYF), 343 to 363 (INLL…GSLA), 370 to 390 (VPFM…YQLV), 399 to 419 (WIGF…MPIL), and 432 to 452 (TGLV…PSVG). N-linked (GlcNAc...) asparagine glycosylation occurs at N463. The chain crosses the membrane as a helical span at residues 506–526 (VFWVGVATPALAWIASWAMEW).

It belongs to the major facilitator superfamily. TCR/Tet family.

It is found in the cell membrane. Functionally, MFS-type transporter; part of the gene cluster that mediates the biosynthesis of luteodienoside A, a glycosylated polyketide consisting of an unusual 1-O-beta-D-glucopyranosyl-myo-inositol (glucinol) ester of 3-hydroxy-2,2,4-trimethylocta-4,6-dienoic acid. LtbE is probably involved in the secretion of luteodienoside A. The sequence is that of MFS-type transporter ltbE from Aspergillus luteorubrus.